Here is a 53-residue protein sequence, read N- to C-terminus: Weak toxin NWT (53 aa).

3 cysteine pairs are disulfide-bonded: Cys-6–Cys-11, Cys-17–Cys-33, and Cys-37–Cys-48.

The protein belongs to the three-finger toxin family. Ancestral subfamily. Orphan group II sub-subfamily. Expressed by the venom gland.

The protein resides in the secreted. Binds with low affinity and weakly inhibits muscle nicotinic acetylcholine receptor (nAChR). In Naja kaouthia (Monocled cobra), this protein is Weak toxin NWT.